A 571-amino-acid polypeptide reads, in one-letter code: Probable pectinesterase/pectinesterase inhibitor 58 (571 aa).

Positions 1 to 28 (MGVDGELKKKKCIIAGVITALLVLMVVA) are cleaved as a signal peptide. 4 N-linked (GlcNAc...) asparagine glycosylation sites follow: N36, N91, N207, and N216. Residues 49–204 (KTATTAVEAV…RELTSNGLAM (156 aa)) form a pectinesterase inhibitor 58 region. Residues 259–556 (NVVVAHDGSG…FTPARFLRGN (298 aa)) are pectinesterase 58. T335 serves as a coordination point for substrate. N347 carries N-linked (GlcNAc...) asparagine glycosylation. Substrate is bound at residue Q365. Catalysis depends on D388, which acts as the Proton donor; for pectinesterase activity. C402 and C422 are oxidised to a cystine. The active-site Nucleophile; for pectinesterase activity is the D409. Residues R477 and W479 each coordinate substrate.

This sequence in the N-terminal section; belongs to the PMEI family. In the C-terminal section; belongs to the pectinesterase family. Expressed in siliques, but not in flower buds.

The protein localises to the secreted. The protein resides in the cell wall. It carries out the reaction [(1-&gt;4)-alpha-D-galacturonosyl methyl ester](n) + n H2O = [(1-&gt;4)-alpha-D-galacturonosyl](n) + n methanol + n H(+). Its pathway is glycan metabolism; pectin degradation; 2-dehydro-3-deoxy-D-gluconate from pectin: step 1/5. Functionally, acts in the modification of cell walls via demethylesterification of cell wall pectin. This is Probable pectinesterase/pectinesterase inhibitor 58 (PME58) from Arabidopsis thaliana (Mouse-ear cress).